Reading from the N-terminus, the 225-residue chain is UPF0758 protein Shewmr4_3597 (225 aa).

An MPN domain is found at 102–224; that stretch reads VLTNPDLTRD…IVSFAERGWI (123 aa). His-173, His-175, and Asp-186 together coordinate Zn(2+). The short motif at 173–186 is the JAMM motif element; the sequence is HNHPSGIAEPSQAD.

This sequence belongs to the UPF0758 family.

This Shewanella sp. (strain MR-4) protein is UPF0758 protein Shewmr4_3597.